The primary structure comprises 258 residues: Pimeloyl-[acyl-carrier protein] methyl ester esterase (258 aa).

Positions 16–241 constitute an AB hydrolase-1 domain; the sequence is LVLLHGWGLN…GSAHAPFVSH (226 aa). Substrate-binding positions include Trp-22, 82 to 83, and 143 to 147; these read SM and FLALQ. The active-site Nucleophile is Ser-82. Active-site residues include Asp-207 and His-235. His-235 provides a ligand contact to substrate.

Belongs to the AB hydrolase superfamily. Carboxylesterase BioH family. In terms of assembly, monomer.

The protein localises to the cytoplasm. The catalysed reaction is 6-carboxyhexanoyl-[ACP] methyl ester + H2O = 6-carboxyhexanoyl-[ACP] + methanol + H(+). The protein operates within cofactor biosynthesis; biotin biosynthesis. Its function is as follows. The physiological role of BioH is to remove the methyl group introduced by BioC when the pimeloyl moiety is complete. It allows to synthesize pimeloyl-ACP via the fatty acid synthetic pathway through the hydrolysis of the ester bonds of pimeloyl-ACP esters. The sequence is that of Pimeloyl-[acyl-carrier protein] methyl ester esterase from Yersinia enterocolitica serotype O:8 / biotype 1B (strain NCTC 13174 / 8081).